The primary structure comprises 872 residues: Alanine--tRNA ligase (872 aa).

Residues His567, His571, Cys669, and His673 each coordinate Zn(2+).

The protein belongs to the class-II aminoacyl-tRNA synthetase family. Zn(2+) serves as cofactor.

The protein localises to the cytoplasm. The catalysed reaction is tRNA(Ala) + L-alanine + ATP = L-alanyl-tRNA(Ala) + AMP + diphosphate. In terms of biological role, catalyzes the attachment of alanine to tRNA(Ala) in a two-step reaction: alanine is first activated by ATP to form Ala-AMP and then transferred to the acceptor end of tRNA(Ala). Also edits incorrectly charged Ser-tRNA(Ala) and Gly-tRNA(Ala) via its editing domain. The sequence is that of Alanine--tRNA ligase from Streptococcus thermophilus (strain CNRZ 1066).